The sequence spans 494 residues: Aspartyl/glutamyl-tRNA(Asn/Gln) amidotransferase subunit B (494 aa).

This sequence belongs to the GatB/GatE family. GatB subfamily. As to quaternary structure, heterotrimer of A, B and C subunits.

It catalyses the reaction L-glutamyl-tRNA(Gln) + L-glutamine + ATP + H2O = L-glutaminyl-tRNA(Gln) + L-glutamate + ADP + phosphate + H(+). The catalysed reaction is L-aspartyl-tRNA(Asn) + L-glutamine + ATP + H2O = L-asparaginyl-tRNA(Asn) + L-glutamate + ADP + phosphate + 2 H(+). Functionally, allows the formation of correctly charged Asn-tRNA(Asn) or Gln-tRNA(Gln) through the transamidation of misacylated Asp-tRNA(Asn) or Glu-tRNA(Gln) in organisms which lack either or both of asparaginyl-tRNA or glutaminyl-tRNA synthetases. The reaction takes place in the presence of glutamine and ATP through an activated phospho-Asp-tRNA(Asn) or phospho-Glu-tRNA(Gln). This is Aspartyl/glutamyl-tRNA(Asn/Gln) amidotransferase subunit B from Protochlamydia amoebophila (strain UWE25).